A 213-amino-acid chain; its full sequence is Sclerostin (213 aa).

The N-terminal stretch at 1 to 23 (MQLPLALCLVCLLVHTAFRVVEG) is a signal peptide. Residues 41 to 71 (GEYPEPPPELENNKTMNRAENGGRPPHHPFE) are disordered. Asn-53 is a glycosylation site (N-linked (GlcNAc...) asparagine). 4 disulfides stabilise this stretch: Cys-80/Cys-134, Cys-94/Cys-148, Cys-105/Cys-165, and Cys-109/Cys-167. One can recognise a CTCK domain in the interval 82-172 (ELHFTRYVTD…ASCKCKRLTR (91 aa)). Residue Asn-175 is glycosylated (N-linked (GlcNAc...) asparagine). The interval 178–213 (ELKDFGTEAARPQKGRKPRPRARSAKANQAELENAY) is disordered. Basic residues predominate over residues 190–201 (QKGRKPRPRARS).

The protein belongs to the sclerostin family. Interacts with LRP4 (via the extracellular domain); the interaction facilitates the inhibition of Wnt signaling. Interacts with LRP5 (via the first two YWTD-EGF repeat domains); the interaction inhibits Wnt-mediated signaling. Interacts with LRP6. Widely expressed at low levels with highest levels in bone, cartilage, kidney, liver, bone marrow and primary osteoblasts differentiated for 21 days. Detected in the subendothelial layer of the aortic intima (at protein level).

It is found in the secreted. The protein localises to the extracellular space. The protein resides in the extracellular matrix. In terms of biological role, negative regulator of bone growth that acts through inhibition of Wnt signaling and bone formation. The protein is Sclerostin of Homo sapiens (Human).